The following is a 136-amino-acid chain: Small ribosomal subunit protein uS9 (136 aa).

Residues 111–136 (DARRTEPHKPSRSTKGPRAKRQKSYR) are disordered. Residues 120 to 136 (PSRSTKGPRAKRQKSYR) show a composition bias toward basic residues.

Belongs to the universal ribosomal protein uS9 family.

The chain is Small ribosomal subunit protein uS9 (rps9) from Methanocaldococcus jannaschii (strain ATCC 43067 / DSM 2661 / JAL-1 / JCM 10045 / NBRC 100440) (Methanococcus jannaschii).